Reading from the N-terminus, the 154-residue chain is Protein-export protein SecB (154 aa).

It belongs to the SecB family. As to quaternary structure, homotetramer, a dimer of dimers. One homotetramer interacts with 1 SecA dimer.

The protein resides in the cytoplasm. In terms of biological role, one of the proteins required for the normal export of preproteins out of the cell cytoplasm. It is a molecular chaperone that binds to a subset of precursor proteins, maintaining them in a translocation-competent state. It also specifically binds to its receptor SecA. This Blochmanniella pennsylvanica (strain BPEN) protein is Protein-export protein SecB.